An 80-amino-acid chain; its full sequence is Large ribosomal subunit protein bL31B (80 aa).

The protein belongs to the bacterial ribosomal protein bL31 family. Type B subfamily. Part of the 50S ribosomal subunit.

The polypeptide is Large ribosomal subunit protein bL31B (Shouchella clausii (strain KSM-K16) (Alkalihalobacillus clausii)).